The following is a 388-amino-acid chain: Succinate--CoA ligase [ADP-forming] subunit beta (388 aa).

Positions 9-244 (KQLFARYGLP…PSQEDSREAH (236 aa)) constitute an ATP-grasp domain. ATP is bound by residues lysine 46, 53–55 (GRG), glutamate 99, threonine 102, and glutamate 107. Residues asparagine 199 and aspartate 213 each coordinate Mg(2+). Residues asparagine 264 and 321-323 (GIV) contribute to the substrate site.

It belongs to the succinate/malate CoA ligase beta subunit family. In terms of assembly, heterotetramer of two alpha and two beta subunits. Mg(2+) serves as cofactor.

The catalysed reaction is succinate + ATP + CoA = succinyl-CoA + ADP + phosphate. It catalyses the reaction GTP + succinate + CoA = succinyl-CoA + GDP + phosphate. The protein operates within carbohydrate metabolism; tricarboxylic acid cycle; succinate from succinyl-CoA (ligase route): step 1/1. In terms of biological role, succinyl-CoA synthetase functions in the citric acid cycle (TCA), coupling the hydrolysis of succinyl-CoA to the synthesis of either ATP or GTP and thus represents the only step of substrate-level phosphorylation in the TCA. The beta subunit provides nucleotide specificity of the enzyme and binds the substrate succinate, while the binding sites for coenzyme A and phosphate are found in the alpha subunit. This is Succinate--CoA ligase [ADP-forming] subunit beta from Pectobacterium carotovorum subsp. carotovorum (strain PC1).